The chain runs to 155 residues: S-ribosylhomocysteine lyase (155 aa).

Fe cation-binding residues include H57, H61, and C124.

Belongs to the LuxS family. Homodimer. Fe cation is required as a cofactor.

It carries out the reaction S-(5-deoxy-D-ribos-5-yl)-L-homocysteine = (S)-4,5-dihydroxypentane-2,3-dione + L-homocysteine. Functionally, involved in the synthesis of autoinducer 2 (AI-2) which is secreted by bacteria and is used to communicate both the cell density and the metabolic potential of the environment. The regulation of gene expression in response to changes in cell density is called quorum sensing. Catalyzes the transformation of S-ribosylhomocysteine (RHC) to homocysteine (HC) and 4,5-dihydroxy-2,3-pentadione (DPD). The protein is S-ribosylhomocysteine lyase of Listeria monocytogenes serotype 4a (strain HCC23).